Consider the following 208-residue polypeptide: Protein-L-isoaspartate O-methyltransferase (208 aa).

Residue serine 59 is part of the active site.

Belongs to the methyltransferase superfamily. L-isoaspartyl/D-aspartyl protein methyltransferase family.

It localises to the cytoplasm. The catalysed reaction is [protein]-L-isoaspartate + S-adenosyl-L-methionine = [protein]-L-isoaspartate alpha-methyl ester + S-adenosyl-L-homocysteine. Functionally, catalyzes the methyl esterification of L-isoaspartyl residues in peptides and proteins that result from spontaneous decomposition of normal L-aspartyl and L-asparaginyl residues. It plays a role in the repair and/or degradation of damaged proteins. The protein is Protein-L-isoaspartate O-methyltransferase of Yersinia pseudotuberculosis serotype O:1b (strain IP 31758).